A 265-amino-acid chain; its full sequence is Hemin import ATP-binding protein HmuV (265 aa).

Residues 13 to 249 enclose the ABC transporter domain; it reads LKASNLHLQL…TAVENVYGWP (237 aa). 45-52 contributes to the ATP binding site; that stretch reads GPNGAGKS.

This sequence belongs to the ABC transporter superfamily. Heme (hemin) importer (TC 3.A.1.14.5) family. In terms of assembly, the complex is composed of two ATP-binding proteins (HmuV), two transmembrane proteins (HmuU) and a solute-binding protein (HmuT).

The protein localises to the cell inner membrane. Functionally, part of the ABC transporter complex HmuTUV involved in hemin import. Responsible for energy coupling to the transport system. The chain is Hemin import ATP-binding protein HmuV from Photobacterium damsela subsp. piscicida (Pasteurella piscicida).